A 739-amino-acid chain; its full sequence is Interleukin-17 receptor D (739 aa).

Positions 1–16 (MAPWLQLCSVFFTVNA) are cleaved as a signal peptide. Residues 17 to 299 (CLNGSQLAVA…VHSPWAGPIR (283 aa)) lie on the Extracellular side of the membrane. N-linked (GlcNAc...) asparagine glycans are attached at residues Asn-19, Asn-55, Asn-62, Asn-80, Asn-137, Asn-171, Asn-206, and Asn-277. Residues 300–320 (AVAITVPLVVISAFATLFTVM) form a helical membrane-spanning segment. Over 321–739 (CRKKQQENIY…TDELHAVAPL (419 aa)) the chain is Cytoplasmic. The SEFIR domain occupies 355 to 509 (RPKVFLCYSS…LMDNLPQLCS (155 aa)). Disordered stretches follow at residues 614–635 (GPAD…EARP) and 650–719 (VKAG…SSGS). Residues 667-702 (SSVPSSELSLPLMEGLSTDQTETSSLTESVSSSSGL) show a composition bias toward low complexity.

Interacts with MAP3K7. Self-associates. Interacts with FGFR1, FGFR2 and phosphorylated MAP2K1 or MAP2K2. Associates with a MAP2K1/2-MAPK1/3 complex. In terms of tissue distribution, expressed in umbilical vein endothelial cells and in several highly vascularized tissues such as kidney, colon, skeletal muscle, heart and small intestine. Highly expressed in ductal epithelial cells of salivary glands, seminal vesicles and the collecting tubules of the kidney. Isoform 1 is also highly expressed in both fetal and adult brain, pituitary, tonsils, spleen, adenoids, fetal kidney, liver, testes and ovary. Isoform 1 is also expressed at moderate levels in primary aortic endothelial cells and adrenal medulla, and at low levels in adrenal cortex. Isoform 4 is specifically and highly expressed in pituitary, fetal brain and umbilical vein endothelial cells.

Its subcellular location is the golgi apparatus membrane. It is found in the cell membrane. The protein localises to the cytoplasm. Feedback inhibitor of fibroblast growth factor mediated Ras-MAPK signaling and ERK activation. Regulates the nuclear ERK signaling pathway by spatially blocking nuclear translocation of activated ERK without inhibiting cytoplasmic phosphorylation of ERK. Mediates JNK activation and may be involved in apoptosis. May inhibit FGF-induced FGFR1 tyrosine phosphorylation. Might have a role in the early stages of fate specification of GnRH-secreting neurons. Inhibits TGFB-induced epithelial-to-mesenchymal transition in lens epithelial cells. The polypeptide is Interleukin-17 receptor D (IL17RD) (Homo sapiens (Human)).